The following is a 463-amino-acid chain: MTATRIETDTFGPIEVAADRYWGAQAQRSLGNFKIGWEKQPLPVVRALGIVKRAAAEANLALGKLDPKIAETIIAAANEVIEGKLNDHFPLVVWQTGSGTQSNMNANEVISNRAIEMLGGEMGSKKPVHPNDHVNMSQSSNDTFPTAMHIACAEQVVHDLLPALKHLHKALAAKAAEWKDIIKIGRTHTQDATPLTLGQEFGGYAQQIENGIARIEMTLPMLMQLAQGGTAVGTGLNAPVGFAELVAEQIAGITGLGFTTAPNKFEALAAHDAMVFTHGAINTVAASLFKIANDIRFLGSGPRAGLGELSLPENEPGSSIMPGKVNPTQSEALTQVCAQVFGNHSTLTFAGSQGHFELNVFNPVMAYNFLQSVRLVADAAISFTDNCVVGIEPRVDNIKKGVENSLMLVTALNGKLGYDACAKIAKTAHKNGTTLREEAVGGGYLTNEEFEQYVRPEKMISPG.

Residues 98–100 (SGT), 129–132 (HPND), 139–141 (SSN), and Thr187 contribute to the substrate site. The active-site Proton donor/acceptor is His188. The active site involves Ser318. Substrate is bound by residues Ser319 and 324–326 (KVN).

The protein belongs to the class-II fumarase/aspartase family. Fumarase subfamily. Homotetramer.

It is found in the cytoplasm. It carries out the reaction (S)-malate = fumarate + H2O. It functions in the pathway carbohydrate metabolism; tricarboxylic acid cycle; (S)-malate from fumarate: step 1/1. In terms of biological role, involved in the TCA cycle. Catalyzes the stereospecific interconversion of fumarate to L-malate. This Caulobacter vibrioides (strain ATCC 19089 / CIP 103742 / CB 15) (Caulobacter crescentus) protein is Fumarate hydratase class II.